Consider the following 303-residue polypeptide: tRNA dimethylallyltransferase (303 aa).

An ATP-binding site is contributed by 9 to 16 (GPTAVGKT). 11–16 (TAVGKT) contributes to the substrate binding site. The interaction with substrate tRNA stretch occupies residues 34–37 (DSRQ).

This sequence belongs to the IPP transferase family. Monomer. The cofactor is Mg(2+).

It carries out the reaction adenosine(37) in tRNA + dimethylallyl diphosphate = N(6)-dimethylallyladenosine(37) in tRNA + diphosphate. Functionally, catalyzes the transfer of a dimethylallyl group onto the adenine at position 37 in tRNAs that read codons beginning with uridine, leading to the formation of N6-(dimethylallyl)adenosine (i(6)A). The protein is tRNA dimethylallyltransferase of Petrotoga mobilis (strain DSM 10674 / SJ95).